A 309-amino-acid chain; its full sequence is Jacalin-related lectin 25 (309 aa).

In terms of domain architecture, Jacalin-type lectin spans 8-190 (MFKVGPIGSQ…LTSIGIYVCP (183 aa)).

The protein belongs to the jacalin lectin family.

The sequence is that of Jacalin-related lectin 25 (JAL25) from Arabidopsis thaliana (Mouse-ear cress).